Consider the following 475-residue polypeptide: Glutamate--tRNA ligase 2 (475 aa).

Residues 11–21 (PSPTGFLHIGG) carry the 'HIGH' region motif. The span at 116–133 (AEGRPPRYDGTWRDKDPA) shows a compositional bias: basic and acidic residues. The interval 116 to 137 (AEGRPPRYDGTWRDKDPAEAPS) is disordered. Residues 240 to 244 (KLSKR) carry the 'KMSKS' region motif. ATP is bound at residue K243.

This sequence belongs to the class-I aminoacyl-tRNA synthetase family. Glutamate--tRNA ligase type 1 subfamily. Monomer.

The protein localises to the cytoplasm. The enzyme catalyses tRNA(Glu) + L-glutamate + ATP = L-glutamyl-tRNA(Glu) + AMP + diphosphate. Catalyzes the attachment of glutamate to tRNA(Glu) in a two-step reaction: glutamate is first activated by ATP to form Glu-AMP and then transferred to the acceptor end of tRNA(Glu). The chain is Glutamate--tRNA ligase 2 from Chelativorans sp. (strain BNC1).